Consider the following 183-residue polypeptide: Dual-action ribosomal maturation protein DarP (183 aa).

This sequence belongs to the DarP family.

It is found in the cytoplasm. Functionally, member of a network of 50S ribosomal subunit biogenesis factors which assembles along the 30S-50S interface, preventing incorrect 23S rRNA structures from forming. Promotes peptidyl transferase center (PTC) maturation. This Escherichia coli O81 (strain ED1a) protein is Dual-action ribosomal maturation protein DarP.